The chain runs to 319 residues: Shiga-like toxin 2 subunit A (319 aa).

An N-terminal signal peptide occupies residues 1–22; it reads MKCILFKWVLCLLLGFSSVSYS. Residues 23 to 272 are A1; it reads REFTIDFSTQ…CHHQGARSVR (250 aa). Glutamate 189 is a catalytic residue. Cysteine 263 and cysteine 282 are joined by a disulfide. The segment at 273 to 314 is A2; it reads AVNEESQPECQITGDRPVIKINNTLWESNTAAAFLNRKSQFL.

The protein belongs to the ribosome-inactivating protein family. In terms of assembly, shiga-like toxin contains a single A subunit and multiple copies of a B subunit.

The protein resides in the secreted. It carries out the reaction Endohydrolysis of the N-glycosidic bond at one specific adenosine on the 28S rRNA.. The A subunit is responsible for inhibiting protein synthesis through the catalytic inactivation of 60S ribosomal subunits. After endocytosis, the A subunit is cleaved by furin in two fragments, A1 and A2: A1 is the catalytically active fragment, and A2 is essential for holotoxin assembly with the B subunits. This is Shiga-like toxin 2 subunit A (stxA2) from Escherichia coli O157:H7 (Bacteriophage 933W).